A 294-amino-acid polypeptide reads, in one-letter code: MNLMEVRELAPSRGQLDVAAVQVKFDSTELLEDRISRIQDLVSGVGKADLIVLPELWLHGGFSYDSWRKNAISLESEVFTFLSEVARDKKAWFHAGSFMVTEPSSAASDMWNTSVLFDPTGSLRATYKKIHRFGFSDGEPKLIAAGDEPRVVELQTERATAITGLSTCYDLRFPELYRHISAEGTALNVIPACWPLTRIQHWQTLGRARAIENQSFVVQCNMTGVDQEVELGGHSQIVDGNGDILAQADKEEAVLRATLNFDSLNELRSSFPVLNDRRADIWAAKGKTVIASHL.

Positions 16 to 261 (LDVAAVQVKF…EAVLRATLNF (246 aa)) constitute a CN hydrolase domain. The Proton acceptor role is filled by glutamate 55. The active-site Proton donor is lysine 129. Cysteine 168 serves as the catalytic Nucleophile.

Belongs to the carbon-nitrogen hydrolase superfamily. NIT1/NIT2 family.

The enzyme catalyses 2-oxoglutaramate + H2O = 2-oxoglutarate + NH4(+). Its pathway is alkaloid degradation; nicotine degradation. Catalyzes the conversion of 2-oxoglutaramate to 2-oxoglutarate. Together with glutamate dehydrogenase, may form a physiologically relevant enzyme couple, leading to transformation of metabolically inert 2-oxoglutaramate derived from trihydroxypyridine into glutamate, a central compound of nitrogen metabolism. The protein is 2-oxoglutaramate amidase of Paenarthrobacter nicotinovorans (Arthrobacter nicotinovorans).